Here is a 1375-residue protein sequence, read N- to C-terminus: Capping protein, Arp2/3 and myosin-I linker protein 3 (1375 aa).

The tract at residues Ile124–Ser151 is disordered. Residues Thr138 to Ser151 show a composition bias toward low complexity. LRR repeat units follow at residues Ser244–Ala264, Val274–Gln295, Gly303–Gly323, Ser335–Tyr357, Ala365–Leu386, His392–Pro413, Thr424–Leu444, Asp455–Glu475, Cys482–Val501, and Ser509–Leu530. Disordered stretches follow at residues Arg864–Ile901 and Lys969–Asp1375. Pro residues predominate over residues Pro981 to Gly997. Over residues Arg1007–Asp1022 the composition is skewed to basic and acidic residues. The segment covering Gln1047–Ser1062 has biased composition (basic residues). Residues Leu1078 to Pro1097 are compositionally biased toward pro residues. Over residues Ser1098–Ser1108 the composition is skewed to low complexity. Positions Arg1219–Glu1229 are enriched in basic and acidic residues. Positions Ala1233 to Ser1244 are enriched in polar residues. Residues Pro1272 to Val1281 are compositionally biased toward pro residues. The span at Gln1348–Pro1360 shows a compositional bias: basic and acidic residues.

The protein belongs to the CARMIL family.

The protein resides in the cytoplasm. The protein localises to the cell membrane. The chain is Capping protein, Arp2/3 and myosin-I linker protein 3 (Carmil3) from Mus musculus (Mouse).